The following is a 604-amino-acid chain: 3-hydroxy-3-methylglutaryl-coenzyme A reductase (604 aa).

A disordered region spans residues 1 to 31; the sequence is MDVRRRSEKPAYPTKEFAAGEKPLKPHKQQQ. The next 2 helical transmembrane spans lie at 40–62 and 90–110; these read ASDA…FFSV and AIAS…IGFV. The segment at 111–189 is linker; it reads QSFVSRDNND…PLVTPAASEE (79 aa). Positions 190–604 are catalytic; that stretch reads DEEIIKSVVQ…STKDVTKASS (415 aa). Glu-283 serves as the catalytic Charge relay system. Asn-347 is a glycosylation site (N-linked (GlcNAc...) asparagine). Catalysis depends on Lys-415, which acts as the Charge relay system. Residue Asn-460 is glycosylated (N-linked (GlcNAc...) asparagine). Asp-491 (charge relay system) is an active-site residue. His-589 (proton donor) is an active-site residue. An N-linked (GlcNAc...) asparagine glycan is attached at Asn-593.

This sequence belongs to the HMG-CoA reductase family. In terms of tissue distribution, found in protoplasts and leaves submitted to stress. Low levels found in apexes, anthers and roots.

It localises to the endoplasmic reticulum membrane. It carries out the reaction (R)-mevalonate + 2 NADP(+) + CoA = (3S)-3-hydroxy-3-methylglutaryl-CoA + 2 NADPH + 2 H(+). The protein operates within metabolic intermediate biosynthesis; (R)-mevalonate biosynthesis; (R)-mevalonate from acetyl-CoA: step 3/3. Its function is as follows. Catalyzes the synthesis of mevalonate, the specific precursor of all isoprenoid compounds present in plants. Possible role in plant defense mechanisms as well as in the cell cycle. The polypeptide is 3-hydroxy-3-methylglutaryl-coenzyme A reductase (HMGR) (Nicotiana sylvestris (Wood tobacco)).